The following is a 785-amino-acid chain: Terminal nucleotidyltransferase 4A (785 aa).

Residues 56-184 form a disordered region; that stretch reads AAGRAAPAAG…QFHPGRRKRE (129 aa). Residues 68-85 show a composition bias toward pro residues; that stretch reads GPAPAASSPPPAPGPAAL. Low complexity-rich tracts occupy residues 86–98 and 106–145; these read PPALLTALGPAAD and SPSLSSSSSSSSSNAESGTESPGCSSSSSSSTSLGRAGSG. Mg(2+) contacts are provided by Asp290 and Asp292. The ATP site is built by Gly353, Lys378, Ser396, and Tyr397. Residues 421–480 enclose the PAP-associated domain; sequence NLGMLLVEFFELYGRNFNYLKTGIRIKEGGAYIAKEEIMKAMTSGYRPSMLCIEDPLLPG. Residues Asn481 and Arg485 each coordinate ATP. The segment covering 593–611 has biased composition (low complexity); sequence PQLLSSGSSASSVSSLSGS. Disordered regions lie at residues 593-625 and 731-785; these read PQLLSSGSSASSVSSLSGSDIDSDTPPCTTPSV and KGSH…SLSR. Basic residues predominate over residues 757-774; it reads RGHHQYNRTGWRRKKHAH.

It belongs to the DNA polymerase type-B-like family. In terms of assembly, component of a nuclear TRAMP-like complex, an ATP-dependent exosome regulatory complex consisting of a helicase (MTREX), an oligadenylate polymerase (TENT4B or TENT4A), and a substrate specific RNA-binding factor (ZCCHC7 or ZCCHC8). Several TRAMP-like complexes exist with specific compositions and are associated with nuclear, or nucleolar RNA exosomes. Mg(2+) serves as cofactor. The cofactor is Mn(2+).

Its subcellular location is the cytoplasm. The protein localises to the nucleus. The protein resides in the nucleoplasm. It catalyses the reaction RNA(n) + ATP = RNA(n)-3'-adenine ribonucleotide + diphosphate. Functionally, terminal nucleotidyltransferase that catalyzes preferentially the transfer of ATP and GTP on RNA 3' poly(A) tail creating a heterogeneous 3' poly(A) tail leading to mRNAs stabilization by protecting mRNAs from active deadenylation. Also functions as a catalytic subunit of a TRAMP-like complex which has a poly(A) RNA polymerase activity and is involved in a post-transcriptional quality control mechanism. Polyadenylation with short oligo(A) tails is required for the degradative activity of the exosome on several of its nuclear RNA substrates. Has no terminal uridylyltransferase activity, and does not play a role in replication-dependent histone mRNA degradation via uridylation. This Mus musculus (Mouse) protein is Terminal nucleotidyltransferase 4A.